The chain runs to 420 residues: Pyruvate dehydrogenase E1 component subunit alpha, mitochondrial (420 aa).

The N-terminal 33 residues, 1-33, are a transit peptide targeting the mitochondrion; sequence MLAASFKRQPSQLVRGLGAVLRTPTRIGHVRTM. Residues His-112, Tyr-138, Arg-139, Ala-177, Gly-185, Val-187, Asp-216, Gly-217, Ala-218, Asn-245, and Tyr-247 each coordinate pyruvate. Residues Tyr-138 and Arg-139 each contribute to the thiamine diphosphate site. Gly-185, Val-187, Asp-216, Gly-217, Ala-218, and Asn-245 together coordinate thiamine diphosphate. Asp-216 contacts Mg(2+). The Mg(2+) site is built by Asn-245 and Tyr-247. His-312 provides a ligand contact to thiamine diphosphate. A Phosphoserine; by PDK1 and PDK2 modification is found at Ser-313.

As to quaternary structure, pyruvate dehydrogenase (E1) is a tetramer of 2 alpha and 2 beta subunits. Eukaryotic pyruvate dehydrogenase (PDH) complexes are organized as a core consisting of the oligomeric dihydrolipoamide acetyl-transferase (E2), around which are arranged multiple copies of pyruvate dehydrogenase (E1), dihydrolipoamide dehydrogenase (E3) and protein X (E3BP) bound by non-covalent bonds. Requires thiamine diphosphate as cofactor. The cofactor is Mg(2+). In terms of processing, phosphorylated at Ser-313 by pyruvate dehydrogenase kinases PKP1 (PDK1) and PKP2 (PDK2), and dephosphorylated by pyruvate dehydrogenase phosphatases PTC5 and PTC6.

It localises to the mitochondrion matrix. The enzyme catalyses N(6)-[(R)-lipoyl]-L-lysyl-[protein] + pyruvate + H(+) = N(6)-[(R)-S(8)-acetyldihydrolipoyl]-L-lysyl-[protein] + CO2. Its activity is regulated as follows. E1 activity is regulated by phosphorylation (inactivation) and dephosphorylation (activation) of the alpha subunit. Its function is as follows. The pyruvate dehydrogenase complex catalyzes the overall conversion of pyruvate to acetyl-CoA and CO(2). This Saccharomyces cerevisiae (strain ATCC 204508 / S288c) (Baker's yeast) protein is Pyruvate dehydrogenase E1 component subunit alpha, mitochondrial (PDA1).